Reading from the N-terminus, the 196-residue chain is Thymidine kinase (196 aa).

ATP is bound by residues 9 to 16 (GTMNSGKS) and 85 to 88 (DEAQ). The active-site Proton acceptor is Glu-86. Zn(2+)-binding residues include Cys-143, Cys-146, Cys-180, and His-183.

This sequence belongs to the thymidine kinase family. As to quaternary structure, homotetramer.

It is found in the cytoplasm. It catalyses the reaction thymidine + ATP = dTMP + ADP + H(+). This chain is Thymidine kinase, found in Streptococcus thermophilus (strain CNRZ 1066).